The sequence spans 313 residues: Glyoxylate/hydroxypyruvate reductase A (313 aa).

Arginine 228 is an active-site residue. Histidine 276 serves as the catalytic Proton donor.

It belongs to the D-isomer specific 2-hydroxyacid dehydrogenase family. GhrA subfamily.

It is found in the cytoplasm. It carries out the reaction glycolate + NADP(+) = glyoxylate + NADPH + H(+). The enzyme catalyses (R)-glycerate + NAD(+) = 3-hydroxypyruvate + NADH + H(+). It catalyses the reaction (R)-glycerate + NADP(+) = 3-hydroxypyruvate + NADPH + H(+). Catalyzes the NADPH-dependent reduction of glyoxylate and hydroxypyruvate into glycolate and glycerate, respectively. This is Glyoxylate/hydroxypyruvate reductase A from Photorhabdus laumondii subsp. laumondii (strain DSM 15139 / CIP 105565 / TT01) (Photorhabdus luminescens subsp. laumondii).